The chain runs to 89 residues: DNA-binding protein HU (89 aa).

It belongs to the bacterial histone-like protein family. In terms of assembly, homodimer. The dimer interacts with the DNA mimic protein DMP12. It also interacts with the monomeric form of the DNA mimic protein DMP19 with 1:1 stoichiometry.

Activity is regulated by the DNA mimic protein DMP12. Activity is inhibited in the presence of the DNA mimic protein DMP19, which interacts with HU and prevents the binding of HU to DNA. In terms of biological role, histone-like DNA-binding protein which is capable of wrapping DNA to stabilize it, and thus to prevent its denaturation under extreme environmental conditions. The sequence is that of DNA-binding protein HU from Neisseria meningitidis serogroup B (strain ATCC BAA-335 / MC58).